Consider the following 523-residue polypeptide: 2-hydroxyisoflavanone synthase (523 aa).

A helical membrane pass occupies residues 2-22 (LVELAITLLVIALFIHLRPTL). C450 serves as a coordination point for heme.

It belongs to the cytochrome P450 family. It depends on heme as a cofactor.

Its subcellular location is the microsome membrane. The catalysed reaction is (2S)-liquiritigenin + reduced [NADPH--hemoprotein reductase] + O2 = (2R,3S)-2,4',7-trihydroxyisoflavanone + oxidized [NADPH--hemoprotein reductase] + H2O + H(+). It catalyses the reaction (2S)-naringenin + reduced [NADPH--hemoprotein reductase] + O2 = 2-hydroxy-2,3-dihydrogenistein + oxidized [NADPH--hemoprotein reductase] + H2O + H(+). Functionally, 2-hydroxyisoflavanone synthase, which catalyzes the hydroxylation associated with 1,2-aryl migration of flavanones. Converts liquiritigenin and naringenin into highly unstable precursors of the isoflavones daidzein and genistein. Acts only on substrates with (2S)-chirality. The sequence is that of 2-hydroxyisoflavanone synthase (CYP93C2) from Glycyrrhiza echinata (Licorice).